Here is a 217-residue protein sequence, read N- to C-terminus: Membrane-associated progesterone receptor component 2 (217 aa).

O-linked (Xyl...) (chondroitin sulfate) serine glycosylation occurs at Ser-15. The chain crosses the membrane as a helical span at residues 40–62 (ALLATGGEMLLNVALVALVLLGA). Residues Ser-84, Ser-98, and Ser-202 each carry the phosphoserine modification. The region spanning 96-195 (DFSLEQLRQY…EKYDYVGRLL (100 aa)) is the Cytochrome b5 heme-binding domain. Residues 196 to 217 (KPGEEPSEYTDEEDTKDHSKQD) form a disordered region. Acidic residues predominate over residues 200-209 (EPSEYTDEED). Tyr-204 is subject to Phosphotyrosine. Thr-205 bears the Phosphothreonine mark.

Belongs to the cytochrome b5 family. MAPR subfamily. As to quaternary structure, interacts with PGRMC1. Interacts with AAAS. In terms of tissue distribution, expressed in brown adipose tissue, white adipose tissue, liver, heart, skeletal muscle, brain and adrenal gland.

It localises to the membrane. Its subcellular location is the nucleus envelope. The protein localises to the endoplasmic reticulum. The protein resides in the secreted. Its function is as follows. Required for the maintenance of uterine histoarchitecture and normal female reproductive lifespan. May serve as a universal non-classical progesterone receptor in the uterus. Intracellular heme chaperone required for delivery of labile, or signaling heme, to the nucleus. Plays a role in adipocyte function and systemic glucose homeostasis. In brown fat, which has a high demand for heme, delivery of labile heme in the nucleus regulates the activity of heme-responsive transcriptional repressors such as NR1D1 and BACH1. The chain is Membrane-associated progesterone receptor component 2 from Mus musculus (Mouse).